The following is a 636-amino-acid chain: Eisosome protein sle1 (636 aa).

The segment at 1–297 is required for targeting the protein to eisosomes; that stretch reads MSHASKNYNA…HVIIYENKEG (297 aa). 6 disordered regions span residues 111–205, 222–284, 313–387, 400–451, 467–550, and 572–604; these read ANYM…SPAN, YSPS…VPPV, DPSG…TQHF, QYYQ…QPSL, DITP…VNNA, and PSNH…RFAN. 5 stretches are compositionally biased toward polar residues: residues 131-159, 166-178, 188-204, 237-255, and 315-354; these read PSQQ…QSYQ, RTSQ…NNYS, RRSS…GSPA, SYNN…TQKS, and SGSN…VVSR. Positions 355–383 are enriched in low complexity; that stretch reads SGQNNNQPAQPGQYNQQSQPVQSYQSGQS. 2 stretches are compositionally biased toward polar residues: residues 400-412 and 422-439; these read QYYQ…QPVQ and PVQS…QPVQ. Low complexity predominate over residues 471–484; it reads TASSTTANNAYASA. Residues 503–512 are compositionally biased toward basic and acidic residues; it reads SFERERDSGR. Residues 572 to 589 are compositionally biased toward polar residues; that stretch reads PSNHAYSEGRSYTFTGGQ.

As to quaternary structure, component of eisosomes, large cytoplasmic protein assemblies that localize to specialized domains termed MCCs on the plasma membrane.

It localises to the cytoplasm. It is found in the cell cortex. The protein localises to the cell tip. Functionally, important for the biogenesis of filamentous eisosomes, large cytoplasmic protein assemblies that localize to specialized domains on the plasma membrane to cluster specific proteins at sites of membrane invaginations. This Schizosaccharomyces pombe (strain 972 / ATCC 24843) (Fission yeast) protein is Eisosome protein sle1 (sle1).